The chain runs to 240 residues: Pyridoxine 5'-phosphate synthase (240 aa).

Asn-7 is a 3-amino-2-oxopropyl phosphate binding site. 1-deoxy-D-xylulose 5-phosphate is bound at residue Asp-9 to His-10. 3-amino-2-oxopropyl phosphate is bound at residue Arg-18. The active-site Proton acceptor is the His-43. 1-deoxy-D-xylulose 5-phosphate-binding residues include Arg-45 and His-50. Glu-70 acts as the Proton acceptor in catalysis. Thr-100 serves as a coordination point for 1-deoxy-D-xylulose 5-phosphate. His-191 acts as the Proton donor in catalysis. Residues Gly-192 and Gly-213–His-214 contribute to the 3-amino-2-oxopropyl phosphate site.

The protein belongs to the PNP synthase family. As to quaternary structure, homooctamer; tetramer of dimers.

The protein resides in the cytoplasm. It catalyses the reaction 3-amino-2-oxopropyl phosphate + 1-deoxy-D-xylulose 5-phosphate = pyridoxine 5'-phosphate + phosphate + 2 H2O + H(+). Its pathway is cofactor biosynthesis; pyridoxine 5'-phosphate biosynthesis; pyridoxine 5'-phosphate from D-erythrose 4-phosphate: step 5/5. Its function is as follows. Catalyzes the complicated ring closure reaction between the two acyclic compounds 1-deoxy-D-xylulose-5-phosphate (DXP) and 3-amino-2-oxopropyl phosphate (1-amino-acetone-3-phosphate or AAP) to form pyridoxine 5'-phosphate (PNP) and inorganic phosphate. The chain is Pyridoxine 5'-phosphate synthase from Cyanothece sp. (strain PCC 7425 / ATCC 29141).